The chain runs to 251 residues: HTH-type transcriptional regulator UlaR (251 aa).

The HTH deoR-type domain occupies 3–58 (EAQRHQILLEMLAQLGFVTVEKVVERLGISPATARRDINKLDESGKLKKVRNGAEA). A DNA-binding region (H-T-H motif) is located at residues 20 to 39 (VTVEKVVERLGISPATARRD).

It is found in the cytoplasm. In terms of biological role, represses ulaG and the ulaABCDEF operon. The polypeptide is HTH-type transcriptional regulator UlaR (Escherichia coli O127:H6 (strain E2348/69 / EPEC)).